The primary structure comprises 389 residues: Ribosomal RNA large subunit methyltransferase M (389 aa).

Over residues 1-13 (MIGNARMSQKYPT) the composition is skewed to polar residues. Residues 1–24 (MIGNARMSQKYPTSSSRKRSPLSS) are disordered. S-adenosyl-L-methionine is bound by residues S214, 247–250 (APGG), D266, D286, and D302. K331 serves as the catalytic Proton acceptor.

It belongs to the class I-like SAM-binding methyltransferase superfamily. RNA methyltransferase RlmE family. RlmM subfamily. As to quaternary structure, monomer.

The protein resides in the cytoplasm. It carries out the reaction cytidine(2498) in 23S rRNA + S-adenosyl-L-methionine = 2'-O-methylcytidine(2498) in 23S rRNA + S-adenosyl-L-homocysteine + H(+). Its function is as follows. Catalyzes the 2'-O-methylation at nucleotide C2498 in 23S rRNA. In Hahella chejuensis (strain KCTC 2396), this protein is Ribosomal RNA large subunit methyltransferase M.